The following is a 259-amino-acid chain: Phosphate import ATP-binding protein PstB (259 aa).

The ABC transporter domain occupies 13 to 254 (IAVKNLNFFY…PTRKETEDYI (242 aa)). 45–52 (GPSGCGKS) contributes to the ATP binding site.

The protein belongs to the ABC transporter superfamily. Phosphate importer (TC 3.A.1.7) family. As to quaternary structure, the complex is composed of two ATP-binding proteins (PstB), two transmembrane proteins (PstC and PstA) and a solute-binding protein (PstS).

Its subcellular location is the cell inner membrane. The enzyme catalyses phosphate(out) + ATP + H2O = ADP + 2 phosphate(in) + H(+). Functionally, part of the ABC transporter complex PstSACB involved in phosphate import. Responsible for energy coupling to the transport system. The chain is Phosphate import ATP-binding protein PstB from Albidiferax ferrireducens (strain ATCC BAA-621 / DSM 15236 / T118) (Rhodoferax ferrireducens).